The following is a 62-amino-acid chain: Temporin-La (62 aa).

The N-terminal stretch at 1 to 22 (MFPLKKSLLLLFFLGTINLSFC) is a signal peptide. The propeptide occupies 23–47 (EEERDVDQDERRDDPGERNVQVEKR). Leu-60 bears the Leucine amide mark.

This sequence belongs to the frog skin active peptide (FSAP) family. Temporin subfamily. Expressed by the skin glands.

It localises to the secreted. The protein resides in the target cell membrane. Functionally, antimicrobial peptide with amphipathic alpha-helical structure that acts against both Gram-positive and Gram-negative bacteria and the fungus Candida albicans. Is active against S.aureus ATCC 25923 (MIC=2.5 ug/ml), S.suis 2 CVCC 606 (MIC=15.6 ug/ml), Salmonella ATCC 20020 (MIC=15.6 ug/ml), P.aeruginosa ATCC 227853 (MIC=60 ug/ml), and C.albicans ATCC10231 (MIC=31.25 ug/ml). Is not active against B.subtilis ADB403, E.coli ATCC 25922, and K.pneumoniae ATCC 700603. Also shows a strong antitumor activity, but no hemolytic activity. This Aquarana catesbeiana (American bullfrog) protein is Temporin-La.